A 258-amino-acid chain; its full sequence is Putative gamma-secretase subunit APH-1C (258 aa).

Transmembrane regions (helical) follow at residues 5-25, 32-52, 71-91, 116-136, 161-181, 187-207, and 214-234; these read VFFG…LFTI, VIFL…SSMF, LLIF…LAYY, LLAY…SFVN, AFMT…FFDG, WYTL…TFLS, and LVTA…VAGG.

It belongs to the APH-1 family. As to quaternary structure, potential component of the gamma-secretase complex.

Its subcellular location is the membrane. In terms of biological role, potential subunit of the gamma-secretase complex, an endoprotease complex that catalyzes the intramembrane cleavage of integral proteins such as Notch receptors and APP (amyloid-beta precursor protein). This is Putative gamma-secretase subunit APH-1C (Aph1c) from Mus musculus (Mouse).